The sequence spans 213 residues: Adenylate kinase (213 aa).

Residue 10 to 15 (GAGKGT) coordinates ATP. An NMP region spans residues 30-59 (STGDMLRAALKEGTPLGLEAKKYMDQGALV). AMP is bound by residues Thr-31, Arg-36, 57 to 59 (ALV), 85 to 88 (GFPR), and Gln-92. The LID stretch occupies residues 126 to 163 (GRRTCRSCGAGFHVMFDPPKTDGKCDKCGGELYQRDDD). Residue Arg-127 participates in ATP binding. Zn(2+) is bound by residues Cys-130, Cys-133, Cys-150, and Cys-153. Residues Arg-160 and Arg-171 each coordinate AMP. Gly-199 serves as a coordination point for ATP.

It belongs to the adenylate kinase family. In terms of assembly, monomer.

It is found in the cytoplasm. The enzyme catalyses AMP + ATP = 2 ADP. Its pathway is purine metabolism; AMP biosynthesis via salvage pathway; AMP from ADP: step 1/1. Functionally, catalyzes the reversible transfer of the terminal phosphate group between ATP and AMP. Plays an important role in cellular energy homeostasis and in adenine nucleotide metabolism. The chain is Adenylate kinase from Syntrophobacter fumaroxidans (strain DSM 10017 / MPOB).